The following is a 171-amino-acid chain: Large ribosomal subunit protein bL9 (171 aa).

The protein belongs to the bacterial ribosomal protein bL9 family.

Binds to the 23S rRNA. The chain is Large ribosomal subunit protein bL9 from Rickettsia conorii (strain ATCC VR-613 / Malish 7).